The chain runs to 122 residues: Large ribosomal subunit protein uL14 (122 aa).

The protein belongs to the universal ribosomal protein uL14 family. As to quaternary structure, part of the 50S ribosomal subunit. Forms a cluster with proteins L3 and L19. In the 70S ribosome, L14 and L19 interact and together make contacts with the 16S rRNA in bridges B5 and B8.

Functionally, binds to 23S rRNA. Forms part of two intersubunit bridges in the 70S ribosome. This chain is Large ribosomal subunit protein uL14, found in Thermosipho melanesiensis (strain DSM 12029 / CIP 104789 / BI429).